The primary structure comprises 413 residues: D-nopaline dehydrogenase (413 aa).

It belongs to the lysopine/nopaline/octopine/opine/vitopine dehydrogenases family. As to quaternary structure, homotetramer.

It catalyses the reaction D-nopaline + NADP(+) + H2O = L-arginine + 2-oxoglutarate + NADPH + H(+). The chain is D-nopaline dehydrogenase (nos) from Agrobacterium tumefaciens (strain T37).